Reading from the N-terminus, the 106-residue chain is U1-lycotoxin-Ls1b (106 aa).

Residues 1 to 19 (MKVLVVVALLVTLISYSSS) form the signal peptide. Positions 20-40 (EGIDDPEADELLSLMANEQTR) are excised as a propeptide. Disulfide bonds link Cys-43–Cys-58, Cys-50–Cys-67, Cys-57–Cys-85, and Cys-69–Cys-83.

This sequence belongs to the neurotoxin 19 (CSTX) family. 04 (U1-Lctx) subfamily. Expressed by the venom gland.

The protein resides in the secreted. The protein is U1-lycotoxin-Ls1b of Lycosa singoriensis (Wolf spider).